A 232-amino-acid chain; its full sequence is Sugar fermentation stimulation protein homolog (232 aa).

It belongs to the SfsA family.

In Magnetococcus marinus (strain ATCC BAA-1437 / JCM 17883 / MC-1), this protein is Sugar fermentation stimulation protein homolog.